A 522-amino-acid polypeptide reads, in one-letter code: MSFSRSAADPADTLPDLAATLAAPDTHAFLRLGDAFHTRLPAAPLAAPYVVGFSDEVARLLGLPASLAAQPGFAELFAGNPTRDWPAEALPYASVYSGHQFGVWAGQLGDGRALTIGELPGTDGRRYELQLKGSGRTPYSRMGDGRAVLRSSIREFLCSEAMHHLGIPTTRALTVIGSDQPVVREEIETAAVVTRVSESFVRFGHFEHFFSNNRPDLLRALADHVIDRFYPACRDADDPYLALLEAATRRTAELVAQWQAVGFCHGVMNTDNMSILGVTIDYGPFGFVDAFDANHICNHSDTGGRYAYRMQPRIAHWNCYCLAQALLPLIGLQHGIADDDARAERAVDDAQAVLATFPERFGPALERAMRAKLGLALERDGDAALANQLLETMHASRADFTLTFRRLAQLSKHDASRDAPVRDLFIDREAFDAWANLYRARLSEETRDDAARAAAMNRVNPKYVLRNHLAELAIRRAKEKDFSEVERLAQVLRRPFDEQPEHESYAALPPDWAGSLEVSCSS.

G109, G111, R112, K132, D144, G145, R195, and R202 together coordinate ATP. The active-site Proton acceptor is D271. Residues N272 and D281 each coordinate Mg(2+). D281 provides a ligand contact to ATP.

The protein belongs to the SELO family. It depends on Mg(2+) as a cofactor. Mn(2+) serves as cofactor.

The catalysed reaction is L-seryl-[protein] + ATP = 3-O-(5'-adenylyl)-L-seryl-[protein] + diphosphate. The enzyme catalyses L-threonyl-[protein] + ATP = 3-O-(5'-adenylyl)-L-threonyl-[protein] + diphosphate. It catalyses the reaction L-tyrosyl-[protein] + ATP = O-(5'-adenylyl)-L-tyrosyl-[protein] + diphosphate. It carries out the reaction L-histidyl-[protein] + UTP = N(tele)-(5'-uridylyl)-L-histidyl-[protein] + diphosphate. The catalysed reaction is L-seryl-[protein] + UTP = O-(5'-uridylyl)-L-seryl-[protein] + diphosphate. The enzyme catalyses L-tyrosyl-[protein] + UTP = O-(5'-uridylyl)-L-tyrosyl-[protein] + diphosphate. Nucleotidyltransferase involved in the post-translational modification of proteins. It can catalyze the addition of adenosine monophosphate (AMP) or uridine monophosphate (UMP) to a protein, resulting in modifications known as AMPylation and UMPylation. This is Protein nucleotidyltransferase YdiU from Burkholderia multivorans (strain ATCC 17616 / 249).